The primary structure comprises 592 residues: MYGHHPDYGYGNYGHPPPFAGPESSNSHYGMPPSQGTNSQNNMMMRSQATEPQPIGNTVSPLEFRIHDMNRRLYIFSSTGVSENDQQQWWDAFSHEFFDDDCKLWFVIGSEPVAFASRERYIINRQFIPKFFRSIFDSGMRELQYVLRGPSRECTLANGSQAYENENVLQITRYDQSSQFEVNTEGKLYVEFAPFDEVMNYRIKAWTLELKRSNEFVYNQNTADYRVEAQNPEQENKPRMGFFKSTFNLMTMLKILDPMQSIMSSAKSAPAITPREVMKRTLFQHHQVRQQNMRQQQLNQQMMIPAPEPEKPKPARKRQRKPAANPRGSKKATAAAAAAAAAATNGVPPTVPTASPANNQQFPPNPMTSQFQQMSYPDVMVVGEPSMMGSEFGENDERTISRVENSQYDPNAMQMQSLGQGPNSSMNINGRNMMNQHHPGMQPPPGQQHMPPHSMGSQMPTSMHNPMHMPPGSMQGHGGMPPMPSTMANQMPPPNLPPHTMSNQMPNSRMPPMQGQMPPSGMPGQMSNPNMMGSGMPPMSMSSQMPGSMSNPMPNQMPGGMQMNQMPPPNYSQYTGGPPPQWPPPNSAMITG.

2 disordered regions span residues 14–41 (GHPPPFAGPESSNSHYGMPPSQGTNSQN) and 305–368 (PAPE…NPMT). Positions 23–41 (ESSNSHYGMPPSQGTNSQN) are enriched in polar residues. Residues 322–344 (PAANPRGSKKATAAAAAAAAAAT) show a composition bias toward low complexity. Polar residues predominate over residues 352-368 (PTASPANNQQFPPNPMT). Residues 378–417 (DVMVVGEPSMMGSEFGENDERTISRVENSQYDPNAMQMQS) form the LIM interaction domain (LID) domain. Disordered stretches follow at residues 437–458 (HHPGMQPPPGQQHMPPHSMGSQ) and 559–592 (GGMQMNQMPPPNYSQYTGGPPPQWPPPNSAMITG). Residues 577 to 586 (GPPPQWPPPN) show a composition bias toward pro residues.

The protein belongs to the LDB family. As to quaternary structure, interacts with blmp-1. Expressed in all neurons and some other tissues of the adult, including vulval muscle, and, in males, all the neurons of the tail region. Expressed in vulval cells.

In terms of biological role, binds to the LIM domain of LIM domain-containing transcription factors. Required for the blmp-1-mediated transcriptional activation or repression of several hypodermal genes, such as bed-3. Regulates sam-10 nuclear localization in PLM neurons. Has a role in synaptic differentiation of PLM mechanosensory neurons. Involved in gonadogenesis. In Caenorhabditis elegans, this protein is LIM domain-binding protein 1.